Consider the following 918-residue polypeptide: uncharacterized protein (918 aa).

Disordered stretches follow at residues 66 to 150 (AMVH…SSYG), 226 to 283 (GADG…NADF), 326 to 481 (ADGT…EFGN), 515 to 548 (ALEK…GSNL), 594 to 707 (EITH…NAVK), 737 to 774 (NHSN…SHLT), and 800 to 918 (HITH…IIQM). Low complexity predominate over residues 79–89 (QSSGSSSNTHS). Residues 103-127 (NSEKKDGYNKESKVDEANENTKIKS) are compositionally biased toward basic and acidic residues. The span at 270–281 (SKKAASASGSNA) shows a compositional bias: low complexity. 3 stretches are compositionally biased toward polar residues: residues 326 to 354 (ADGT…SSDL), 363 to 372 (KSHSTSNKTD), and 379 to 404 (ANQS…SSIE). The span at 430-441 (SSSHSKSASGTS) shows a compositional bias: low complexity. Residues 515 to 533 (ALEKNHEKNSDGTFKDESK) show a composition bias toward basic and acidic residues. Polar residues-rich tracts occupy residues 534 to 545 (GSNSRVNRTDGG) and 604 to 619 (VAAS…TSMS). The segment covering 632–647 (SSQAADSHDAISASSD) has biased composition (low complexity). Basic and acidic residues predominate over residues 648–660 (VDAKIVKHADRSE). Residues 661–672 (SISNDSSNQTAS) show a composition bias toward polar residues. Over residues 673 to 688 (EHNDSSKQSEHEKRQN) the composition is skewed to basic and acidic residues. Residues 689 to 702 (ADGSFSDVSSNSAK) are compositionally biased toward polar residues. 4 stretches are compositionally biased toward basic and acidic residues: residues 738–765 (HSND…DAKH), 800–814 (HITH…DAGH), 830–846 (EGFK…EGAQ), and 883–918 (LAKD…IIQM).

This is an uncharacterized protein from Caenorhabditis elegans.